A 171-amino-acid polypeptide reads, in one-letter code: Spiderine-2b (171 aa).

Residues 1–18 (MKFALVLLGFCAFYLVNA) form the signal peptide. Positions 19–58 (TGDLETELEASDLQELQEALDLIAETPLESLEAEELEEAR) are cleaved as a propeptide — removed in mature form. The tract at residues 59–104 (KFKFPKINWGKLASKAKDVYKKGQKLAKNKNVKKALKYGKQLAENL) is linear cationic cytotoxin domain. Positions 118–171 (NNKCWAIGTRCTDDCDCCPEHHCHCPAKSWTFGLIPCSCQVTESDKVNKCPPAE) constitute an Oxytoxin-type inhibitor cystine knot (ICK) domain. 5 disulfides stabilise this stretch: Cys121/Cys135, Cys128/Cys140, Cys132/Cys167, Cys134/Cys156, and Cys142/Cys154.

This sequence belongs to the spiderine family. Cationic/spiderine subfamily. As to expression, expressed by the venom gland.

The protein localises to the secreted. Its function is as follows. Has antimicrobial, insecticidal, cytolytic and cytotoxic activity. The chain is Spiderine-2b from Oxyopes takobius (Lynx spider).